The chain runs to 331 residues: Biotin synthase (331 aa).

Residues 52-277 (PEVEVEGIVS…RTILRYAGGR (226 aa)) enclose the Radical SAM core domain. Positions 67, 71, and 74 each coordinate [4Fe-4S] cluster. The [2Fe-2S] cluster site is built by Cys110, Cys202, and Arg272.

Belongs to the radical SAM superfamily. Biotin synthase family. As to quaternary structure, homodimer. The cofactor is [4Fe-4S] cluster. It depends on [2Fe-2S] cluster as a cofactor.

It carries out the reaction (4R,5S)-dethiobiotin + (sulfur carrier)-SH + 2 reduced [2Fe-2S]-[ferredoxin] + 2 S-adenosyl-L-methionine = (sulfur carrier)-H + biotin + 2 5'-deoxyadenosine + 2 L-methionine + 2 oxidized [2Fe-2S]-[ferredoxin]. The protein operates within cofactor biosynthesis; biotin biosynthesis; biotin from 7,8-diaminononanoate: step 2/2. Functionally, catalyzes the conversion of dethiobiotin (DTB) to biotin by the insertion of a sulfur atom into dethiobiotin via a radical-based mechanism. This chain is Biotin synthase, found in Salinispora arenicola (strain CNS-205).